Here is a 376-residue protein sequence, read N- to C-terminus: Riboflavin biosynthesis protein RibD (376 aa).

The segment at 1–150 (MEDFSEQQLF…QPYLYQRTHN (150 aa)) is deaminase. In terms of domain architecture, CMP/dCMP-type deaminase spans 6–128 (EQQLFFMRRA…MLRQAGIQVY (123 aa)). Histidine 55 contacts Zn(2+). Glutamate 57 serves as the catalytic Proton donor. The Zn(2+) site is built by cysteine 80 and cysteine 89. The interval 151–376 (FPWTILKSAA…SPQVFEPIRN (226 aa)) is reductase. Alanine 159 serves as a coordination point for NADP(+). Residue serine 173 coordinates substrate. Position 175 (tryptophan 175) interacts with NADP(+). Position 189 (arginine 189) interacts with substrate. 2 residues coordinate NADP(+): threonine 201 and aspartate 205. Leucine 209 and arginine 212 together coordinate substrate. Serine 230 contributes to the NADP(+) binding site. Residue glutamate 300 coordinates substrate. 302-308 (GTTLHTS) lines the NADP(+) pocket.

This sequence in the N-terminal section; belongs to the cytidine and deoxycytidylate deaminase family. The protein in the C-terminal section; belongs to the HTP reductase family. It depends on Zn(2+) as a cofactor.

It carries out the reaction 2,5-diamino-6-hydroxy-4-(5-phosphoribosylamino)-pyrimidine + H2O + H(+) = 5-amino-6-(5-phospho-D-ribosylamino)uracil + NH4(+). It catalyses the reaction 5-amino-6-(5-phospho-D-ribitylamino)uracil + NADP(+) = 5-amino-6-(5-phospho-D-ribosylamino)uracil + NADPH + H(+). Its pathway is cofactor biosynthesis; riboflavin biosynthesis; 5-amino-6-(D-ribitylamino)uracil from GTP: step 2/4. It functions in the pathway cofactor biosynthesis; riboflavin biosynthesis; 5-amino-6-(D-ribitylamino)uracil from GTP: step 3/4. Its function is as follows. Converts 2,5-diamino-6-(ribosylamino)-4(3h)-pyrimidinone 5'-phosphate into 5-amino-6-(ribosylamino)-2,4(1h,3h)-pyrimidinedione 5'-phosphate. The polypeptide is Riboflavin biosynthesis protein RibD (ribD) (Chlamydia pneumoniae (Chlamydophila pneumoniae)).